We begin with the raw amino-acid sequence, 450 residues long: MRKLWAPNWLSAKRHHANQAATRLIGRHALMAWLAAALALSAGAAQAQLNVEISGVGASQIPVATANFQGEAQAPQNLTAIIRSDLARSGRLRNVDPGGATVAESANVDLGSWKSRGADAFVAGSVTPSGNGQYEVRFRLYDTVKGQSLGGLAFNVNQGQLRVTAHKIADYIYEKLLGERGVFATRLSYVSRVGGRYQLLISDSDGQNSQVALTSNEPIISPSWSPDGRRVAYVSFEAKKPVVYVHDLATGKRTLVSNQKGNNSAPSWSPDGQHLAVALSRDGNTQVYQVNADGSGIRRLTRSSAIDTEPQYSPDGKSIYFTSDRGGAPQVYRMPAGGEEAGSAQRVTFKGSYNVSPRISPDGKYLAYITRSGGFKLQLQDLTNGDVTSLTDTSNDEAPSFAANGKYILYATRVGGRSVLAAVSTDGRTRQVLSLQSGDVREPSWGPFMQ.

An N-terminal signal peptide occupies residues 1 to 47 (MRKLWAPNWLSAKRHHANQAATRLIGRHALMAWLAAALALSAGAAQA).

It belongs to the TolB family. In terms of assembly, the Tol-Pal system is composed of five core proteins: the inner membrane proteins TolA, TolQ and TolR, the periplasmic protein TolB and the outer membrane protein Pal. They form a network linking the inner and outer membranes and the peptidoglycan layer.

Its subcellular location is the periplasm. In terms of biological role, part of the Tol-Pal system, which plays a role in outer membrane invagination during cell division and is important for maintaining outer membrane integrity. In Cupriavidus pinatubonensis (strain JMP 134 / LMG 1197) (Cupriavidus necator (strain JMP 134)), this protein is Tol-Pal system protein TolB.